The sequence spans 466 residues: Ribulose bisphosphate carboxylase large chain (466 aa).

An N6,N6,N6-trimethyllysine modification is found at Lys5. Residues Asn114 and Thr164 each contribute to the substrate site. Lys166 (proton acceptor) is an active-site residue. A substrate-binding site is contributed by Lys168. Positions 192, 194, and 195 each coordinate Mg(2+). N6-carboxylysine is present on Lys192. The active-site Proton acceptor is His285. Residues Arg286, His318, and Ser370 each contribute to the substrate site.

It belongs to the RuBisCO large chain family. Type I subfamily. Heterohexadecamer of 8 large chains and 8 small chains; disulfide-linked. The disulfide link is formed within the large subunit homodimers. The cofactor is Mg(2+). In terms of processing, the disulfide bond which can form in the large chain dimeric partners within the hexadecamer appears to be associated with oxidative stress and protein turnover.

The protein resides in the plastid. The protein localises to the chloroplast. It carries out the reaction 2 (2R)-3-phosphoglycerate + 2 H(+) = D-ribulose 1,5-bisphosphate + CO2 + H2O. The enzyme catalyses D-ribulose 1,5-bisphosphate + O2 = 2-phosphoglycolate + (2R)-3-phosphoglycerate + 2 H(+). In terms of biological role, ruBisCO catalyzes two reactions: the carboxylation of D-ribulose 1,5-bisphosphate, the primary event in carbon dioxide fixation, as well as the oxidative fragmentation of the pentose substrate in the photorespiration process. Both reactions occur simultaneously and in competition at the same active site. The protein is Ribulose bisphosphate carboxylase large chain of Berzelia lanuginosa (Buttonbush).